We begin with the raw amino-acid sequence, 400 residues long: Imidazolonepropionase (400 aa).

Residues H70 and H72 each contribute to the Fe(3+) site. H70 and H72 together coordinate Zn(2+). 4-imidazolone-5-propanoate contacts are provided by R79, Y142, and H175. Y142 contacts N-formimidoyl-L-glutamate. A Fe(3+)-binding site is contributed by H239. H239 is a binding site for Zn(2+). Q242 is a 4-imidazolone-5-propanoate binding site. A Fe(3+)-binding site is contributed by D314. D314 lines the Zn(2+) pocket. 2 residues coordinate N-formimidoyl-L-glutamate: N316 and G318. A 4-imidazolone-5-propanoate-binding site is contributed by T319.

It belongs to the metallo-dependent hydrolases superfamily. HutI family. Zn(2+) is required as a cofactor. The cofactor is Fe(3+).

It localises to the cytoplasm. The enzyme catalyses 4-imidazolone-5-propanoate + H2O = N-formimidoyl-L-glutamate. Its pathway is amino-acid degradation; L-histidine degradation into L-glutamate; N-formimidoyl-L-glutamate from L-histidine: step 3/3. In terms of biological role, catalyzes the hydrolytic cleavage of the carbon-nitrogen bond in imidazolone-5-propanoate to yield N-formimidoyl-L-glutamate. It is the third step in the universal histidine degradation pathway. The polypeptide is Imidazolonepropionase (Methylobacterium sp. (strain 4-46)).